A 429-amino-acid polypeptide reads, in one-letter code: Phenylalanine--tRNA ligase, chloroplastic/mitochondrial (429 aa).

A chloroplast and mitochondrion-targeting transit peptide spans 1–53 (MTVFSVQSTIFSRASVALLSSNGFKRFSFVSSFSSSAAYSPPKMRKRRYPIVS). Position 54 is an N-acetylalanine (alanine 54). Substrate is bound by residues 163-166 (SAHQ), arginine 185, 192-194 (THY), 199-201 (QME), glutamate 269, and phenylalanine 294. The FDX-ACB domain occupies 338 to 429 (SKYPPCYKDI…VQKKLNVELR (92 aa)).

This sequence belongs to the class-II aminoacyl-tRNA synthetase family. In terms of assembly, monomer.

Its subcellular location is the plastid. It is found in the chloroplast stroma. It localises to the mitochondrion matrix. It catalyses the reaction tRNA(Phe) + L-phenylalanine + ATP = L-phenylalanyl-tRNA(Phe) + AMP + diphosphate + H(+). Its function is as follows. Is responsible for the charging of tRNA(Phe) with phenylalanine in mitochondrial translation. The protein is Phenylalanine--tRNA ligase, chloroplastic/mitochondrial of Arabidopsis thaliana (Mouse-ear cress).